Here is a 563-residue protein sequence, read N- to C-terminus: PHD finger protein EHD3 (563 aa).

Positions 1 to 46 are disordered; sequence MGSQNRPPPPRKRQPPPPEDHLVTYKRRRSKETQPLPLMANGANSK. 3 PHD-type zinc fingers span residues 296-348, 420-472, and 474-524; these read LCPC…CSFK, SNLC…CWYC, and SCLC…CKIR.

Interacts with TRX1. In terms of tissue distribution, expressed in shoot apical meristem and leaves.

The protein resides in the nucleus. Functionally, probable transcription factor involved in the regulation of floral induction under long day (LD) conditions. Promotes photoperiodic flowering by repressing GHD7, a major floral repressor. Seems to function independently of HD1. This is PHD finger protein EHD3 from Oryza sativa subsp. japonica (Rice).